The following is a 252-amino-acid chain: MGVAFDKCETRPANIDAILNGLDRYNPETTTVFQDYVVQQCEDRTFDCYANLALLKLYQFNPHLLQPETVTNILAKALTVFPSPAFSLCLALLPAHTQPFPATNDEAQAASQTSDFVESVQKLARLSTLLESAQYAQFWSTLNSDDLYADLVADVAGFEELVRIRIAVEVGKTFREITADVLEQWLDLRSREALEKFVVEVCSWELDKSAPAGTVVKVPTNKENEARSEVKSERVGIEQFGRVLRRGFEQAA.

The 180-residue stretch at 46 to 225 folds into the PCI domain; it reads FDCYANLALL…VKVPTNKENE (180 aa).

Belongs to the eIF-3 subunit K family. As to quaternary structure, component of the eukaryotic translation initiation factor 3 (eIF-3) complex.

The protein localises to the cytoplasm. Component of the eukaryotic translation initiation factor 3 (eIF-3) complex, which is involved in protein synthesis of a specialized repertoire of mRNAs and, together with other initiation factors, stimulates binding of mRNA and methionyl-tRNAi to the 40S ribosome. The eIF-3 complex specifically targets and initiates translation of a subset of mRNAs involved in cell proliferation. This is Eukaryotic translation initiation factor 3 subunit K from Aspergillus terreus (strain NIH 2624 / FGSC A1156).